A 76-amino-acid polypeptide reads, in one-letter code: UPF0729 protein C18orf32 (76 aa).

Residues 1 to 37 (MVCIPCIVIPVLLWIYKKFLEPYIYPLVSPFVSRIWP) are necessary for its localzation to the endoplasmic reticulum and lipid droplets. The tract at residues 46-76 (DTNKGKVNFKGADMNGLPTKGPTEICDKKKD) is disordered.

This sequence belongs to the UPF0729 family. As to quaternary structure, interacts with DERL1 and AMFR. Post-translationally, undergoes ER-associated degradation (ERAD).

It is found in the endoplasmic reticulum. The protein resides in the lipid droplet. May activate the NF-kappa-B signaling pathway. The chain is UPF0729 protein C18orf32 (C18orf32) from Homo sapiens (Human).